Here is a 493-residue protein sequence, read N- to C-terminus: Amidophosphoribosyltransferase (493 aa).

A propeptide spanning residues 1–26 (MIPTQPLTADLDCDLGLERPDRPEEA) is cleaved from the precursor. The Nucleophile role is filled by Cys-27. The Glutamine amidotransferase type-2 domain maps to 27-252 (CGVFALYAPG…PGEMVRITDA (226 aa)). Cys-268 contacts [4Fe-4S] cluster. Ser-315, Asp-377, and Asp-378 together coordinate Mg(2+). Residues Cys-414, Cys-465, and Cys-468 each coordinate [4Fe-4S] cluster.

It in the C-terminal section; belongs to the purine/pyrimidine phosphoribosyltransferase family. Mg(2+) is required as a cofactor. [4Fe-4S] cluster serves as cofactor.

It carries out the reaction 5-phospho-beta-D-ribosylamine + L-glutamate + diphosphate = 5-phospho-alpha-D-ribose 1-diphosphate + L-glutamine + H2O. Its pathway is purine metabolism; IMP biosynthesis via de novo pathway; N(1)-(5-phospho-D-ribosyl)glycinamide from 5-phospho-alpha-D-ribose 1-diphosphate: step 1/2. Catalyzes the formation of phosphoribosylamine from phosphoribosylpyrophosphate (PRPP) and glutamine. The chain is Amidophosphoribosyltransferase from Synechococcus elongatus (strain ATCC 33912 / PCC 7942 / FACHB-805) (Anacystis nidulans R2).